Here is a 225-residue protein sequence, read N- to C-terminus: Cytidylate kinase (225 aa).

ATP is bound at residue 12-20 (GPSGAGKGT).

It belongs to the cytidylate kinase family. Type 1 subfamily.

Its subcellular location is the cytoplasm. The enzyme catalyses CMP + ATP = CDP + ADP. The catalysed reaction is dCMP + ATP = dCDP + ADP. This Pectobacterium atrosepticum (strain SCRI 1043 / ATCC BAA-672) (Erwinia carotovora subsp. atroseptica) protein is Cytidylate kinase.